A 252-amino-acid polypeptide reads, in one-letter code: Phosphomannomutase (252 aa).

D13 acts as the Nucleophile in catalysis. Mg(2+) is bound by residues D13 and D15. Residue D15 is the Proton donor/acceptor of the active site. The alpha-D-mannose 1-phosphate site is built by R22, R124, R135, R142, S180, and D182. Mg(2+) is bound by residues D208, Y220, and T225.

It belongs to the eukaryotic PMM family. As to quaternary structure, homodimer. It depends on Mg(2+) as a cofactor.

Its subcellular location is the cytoplasm. It catalyses the reaction alpha-D-mannose 1-phosphate = D-mannose 6-phosphate. It participates in nucleotide-sugar biosynthesis; GDP-alpha-D-mannose biosynthesis; alpha-D-mannose 1-phosphate from D-fructose 6-phosphate: step 2/2. In terms of biological role, catalyzes the interconversion of mannose-6-phosphate to mannose-1-phosphate, the precursor for the synthesis of GDP-mannose. GDP-mannose is an essential sugar nucleotide for the synthesis of D-mannose-containing cell wall polysaccharides (galactomannans and glucomannans), glycolipids, glycoproteins and the antioxidant L-ascorbate. Can complement the yeast temperature-sensitive mutant sec53-6. The polypeptide is Phosphomannomutase (Solanum lycopersicum (Tomato)).